The primary structure comprises 177 residues: ATP synthase subunit delta (177 aa).

It belongs to the ATPase delta chain family. In terms of assembly, F-type ATPases have 2 components, F(1) - the catalytic core - and F(0) - the membrane proton channel. F(1) has five subunits: alpha(3), beta(3), gamma(1), delta(1), epsilon(1). F(0) has three main subunits: a(1), b(2) and c(10-14). The alpha and beta chains form an alternating ring which encloses part of the gamma chain. F(1) is attached to F(0) by a central stalk formed by the gamma and epsilon chains, while a peripheral stalk is formed by the delta and b chains.

It is found in the cell inner membrane. In terms of biological role, f(1)F(0) ATP synthase produces ATP from ADP in the presence of a proton or sodium gradient. F-type ATPases consist of two structural domains, F(1) containing the extramembraneous catalytic core and F(0) containing the membrane proton channel, linked together by a central stalk and a peripheral stalk. During catalysis, ATP synthesis in the catalytic domain of F(1) is coupled via a rotary mechanism of the central stalk subunits to proton translocation. Functionally, this protein is part of the stalk that links CF(0) to CF(1). It either transmits conformational changes from CF(0) to CF(1) or is implicated in proton conduction. This Actinobacillus pleuropneumoniae serotype 7 (strain AP76) protein is ATP synthase subunit delta.